Here is a 113-residue protein sequence, read N- to C-terminus: U11-theraphotoxin-Hhn1a (113 aa).

The first 21 residues, M1–A21, serve as a signal peptide directing secretion. Residues D22–R74 constitute a propeptide that is removed on maturation. Residues L59 to N69 show a composition bias toward basic and acidic residues. Residues L59–D83 form a disordered region. 3 disulfides stabilise this stretch: C75/C90, C82/C95, and C89/C110.

This sequence belongs to the neurotoxin 14 (magi-1) family. 01 (HNTX-16) subfamily. As to expression, expressed by the venom gland.

It localises to the secreted. Probable ion channel inhibitor. The polypeptide is U11-theraphotoxin-Hhn1a (Cyriopagopus hainanus (Chinese bird spider)).